The chain runs to 461 residues: Asparagine--tRNA ligase (461 aa).

This sequence belongs to the class-II aminoacyl-tRNA synthetase family. In terms of assembly, homodimer.

It localises to the cytoplasm. It catalyses the reaction tRNA(Asn) + L-asparagine + ATP = L-asparaginyl-tRNA(Asn) + AMP + diphosphate + H(+). This Nitratidesulfovibrio vulgaris (strain ATCC 29579 / DSM 644 / CCUG 34227 / NCIMB 8303 / VKM B-1760 / Hildenborough) (Desulfovibrio vulgaris) protein is Asparagine--tRNA ligase.